The sequence spans 167 residues: Small ribosomal subunit protein uS5 (167 aa).

Positions 12-75 (LQEKLIAVNR…EKARRNMVTI (64 aa)) constitute an S5 DRBM domain.

This sequence belongs to the universal ribosomal protein uS5 family. As to quaternary structure, part of the 30S ribosomal subunit. Contacts proteins S4 and S8.

In terms of biological role, with S4 and S12 plays an important role in translational accuracy. Functionally, located at the back of the 30S subunit body where it stabilizes the conformation of the head with respect to the body. The chain is Small ribosomal subunit protein uS5 from Vibrio vulnificus (strain CMCP6).